Reading from the N-terminus, the 390-residue chain is L-seryl-tRNA(Sec) selenium transferase (390 aa).

N6-(pyridoxal phosphate)lysine is present on K225.

Belongs to the SelA family. It depends on pyridoxal 5'-phosphate as a cofactor.

The protein resides in the cytoplasm. The catalysed reaction is L-seryl-tRNA(Sec) + selenophosphate + H(+) = L-selenocysteinyl-tRNA(Sec) + phosphate. The protein operates within aminoacyl-tRNA biosynthesis; selenocysteinyl-tRNA(Sec) biosynthesis; selenocysteinyl-tRNA(Sec) from L-seryl-tRNA(Sec) (bacterial route): step 1/1. Its function is as follows. Converts seryl-tRNA(Sec) to selenocysteinyl-tRNA(Sec) required for selenoprotein biosynthesis. This Helicobacter pylori (strain J99 / ATCC 700824) (Campylobacter pylori J99) protein is L-seryl-tRNA(Sec) selenium transferase.